The sequence spans 271 residues: Gap junction beta-5 protein (271 aa).

The Cytoplasmic portion of the chain corresponds to 1–20 (MNWSVFEGLLSGVNKYSTAF). Residues 21–40 (GRIWLSLVFVFRVLVYLVTA) traverse the membrane as a helical segment. Residues 41-75 (ERVWGDDQKDFDCNTRQPGCTNVCYDEFFPVSHVR) lie on the Extracellular side of the membrane. Residues 76-98 (LWALQLILVTCPSLLVVMHVAYR) traverse the membrane as a helical segment. Over 99-124 (KAREKKYQQEVGKGYLYPNPGKKRGG) the chain is Cytoplasmic. A helical transmembrane segment spans residues 125-147 (LWWTYVCSLLFKATIDIIFLYLF). At 148 to 182 (HAFYPRYTLPSMVKCHSAPCPNTVDCFIAKPSEKN) the chain is on the extracellular side. Residues 183 to 205 (IFIVFMLVTAIVCILLNLVELLY) traverse the membrane as a helical segment. Topologically, residues 206 to 271 (LVIKRCSECA…PRAHVKKTIL (66 aa)) are cytoplasmic. Residues 217–237 (AKRPPTAHAKNDPNWANPSSK) are disordered.

This sequence belongs to the connexin family. Beta-type (group I) subfamily. A connexon is composed of a hexamer of connexins. Expressed in skin.

It is found in the cell membrane. It localises to the cell junction. Its subcellular location is the gap junction. Its function is as follows. One gap junction consists of a cluster of closely packed pairs of transmembrane channels, the connexons, through which materials of low MW diffuse from one cell to a neighboring cell. The polypeptide is Gap junction beta-5 protein (Gjb5) (Rattus norvegicus (Rat)).